The primary structure comprises 213 residues: Bcl-2-related ovarian killer protein (213 aa).

The BH4 signature appears at 32 to 44; that stretch reads KALCRDYINSRLI. Residues 67–83 carry the BH3 motif; it reads VSAILLRLGDELEYIRP. A BH1 motif is present at residues 113 to 132; it reads QIFTAGITWGKVVSLYAVAA. The short motif at 165–179 is the BH2 element; sequence WLKRRGGWADITKCV. The helical transmembrane segment at 190 to 210 threads the bilayer; that stretch reads WLVAAVCSFGHFLKAIFFVLL.

It belongs to the Bcl-2 family.

It localises to the membrane. Functionally, may play a role in apoptosis. The polypeptide is Bcl-2-related ovarian killer protein (Gallus gallus (Chicken)).